The sequence spans 132 residues: Bleomycin resistance protein (132 aa).

The VOC domain occupies 1–129 (MLQSIPALPV…DNNLISFFQQ (129 aa)).

This sequence belongs to the bleomycin resistance protein family.

In terms of biological role, binding protein with a strong affinity to the bleomycin family of antibiotics. The sequence is that of Bleomycin resistance protein (bleO) from Geobacillus stearothermophilus (Bacillus stearothermophilus).